We begin with the raw amino-acid sequence, 200 residues long: LHFPL tetraspan subfamily member 6 protein (200 aa).

An N-terminal signal peptide occupies residues 1 to 23; sequence MASSLTCTGVIWALLSFLSAATS. The next 3 helical transmembrane spans lie at 84 to 104, 123 to 143, and 166 to 186; these read ICTIVTGLGCGLLLLVALTAL, GIQFLGGLLIGAGCALYPLGW, and IGWAYYCTGAGAAAAMLLCTW.

Belongs to the LHFP family.

The protein resides in the membrane. This is LHFPL tetraspan subfamily member 6 protein from Mus musculus (Mouse).